We begin with the raw amino-acid sequence, 1034 residues long: Isoleucine--tRNA ligase (1034 aa).

Residues 48–58 (PTANGKPHIGH) carry the 'HIGH' region motif. The short motif at 588–592 (KMSKH) is the 'KMSKS' region element. K591 is an ATP binding site.

It belongs to the class-I aminoacyl-tRNA synthetase family. IleS type 2 subfamily. Monomer. Requires Zn(2+) as cofactor.

Its subcellular location is the cytoplasm. It carries out the reaction tRNA(Ile) + L-isoleucine + ATP = L-isoleucyl-tRNA(Ile) + AMP + diphosphate. In terms of biological role, catalyzes the attachment of isoleucine to tRNA(Ile). As IleRS can inadvertently accommodate and process structurally similar amino acids such as valine, to avoid such errors it has two additional distinct tRNA(Ile)-dependent editing activities. One activity is designated as 'pretransfer' editing and involves the hydrolysis of activated Val-AMP. The other activity is designated 'posttransfer' editing and involves deacylation of mischarged Val-tRNA(Ile). This is Isoleucine--tRNA ligase from Clostridium kluyveri (strain ATCC 8527 / DSM 555 / NBRC 12016 / NCIMB 10680 / K1).